A 628-amino-acid polypeptide reads, in one-letter code: E3 SUMO-protein ligase PIAS3 (628 aa).

The interval 1–200 is interaction with CCAR2; that stretch reads MAELGELKHM…QLRFCLCETS (200 aa). The SAP domain maps to 11-45; that stretch reads VMSFRVSELQVLLGFAGRNKSGRKHELLAKALHLL. Positions 19–23 match the LXXLL motif motif; it reads LQVLL. Glycyl lysine isopeptide (Lys-Gly) (interchain with G-Cter in SUMO2) cross-links involve residues Lys46, Lys56, Lys230, and Lys307. The 166-residue stretch at 115 to 280 folds into the PINIT domain; that stretch reads MHPPLPQPVH…SLSVYLVRQL (166 aa). The SP-RING-type zinc finger occupies 312 to 393; it reads PDSEVATTSL…FMEILNSCSD (82 aa). Residues Cys343, His345, Cys366, and Cys369 each contribute to the Zn(2+) site. Positions 450–460 are SUMO1-binding; sequence LTIESSSDEED. Residues Lys466 and Lys482 each participate in a glycyl lysine isopeptide (Lys-Gly) (interchain with G-Cter in SUMO2) cross-link. The tract at residues 571–628 is disordered; sequence GPLAPTLGSSHRSSTPAPPPGRVSSIVAPGSSLREGHGGPLPSGPSLTGCRSDVISLD.

It belongs to the PIAS family. In terms of assembly, monomer. Interacts with PLAG1 and ZFHX3. Interacts with STAT5A; the interaction occurs on stimulation by PRL. Binds SUMO1 and UBE2I. Interacts with AR, BCL11A, HMGA2, IRF1 and NCOA2. Interacts with MITF; the interaction inhibits the transcriptional activity of MITF. Interacts with STAT3; the interaction occurs on stimulation by IL6, CNTF or OSM and inhibits the DNA binding activity of STAT3. Interacts with GFI1; the interaction relieves the inhibitory effect of PIAS3 on STAT3-mediated transcriptional activity. Interacts with MTA1. Interacts with CCAR2 (via N-terminus). Interacts with TRIM8. Interacts with PRDM1. Post-translationally, sumoylated. As to expression, expressed in kidney, heart, spleen, brain and cerebellum; weak expression, if any, in liver and lung.

It is found in the cytoplasm. The protein resides in the nucleus. Its subcellular location is the nucleus speckle. It functions in the pathway protein modification; protein sumoylation. Functionally, functions as an E3-type small ubiquitin-like modifier (SUMO) ligase, stabilizing the interaction between UBE2I and the substrate, and as a SUMO-tethering factor. Plays a crucial role as a transcriptional coregulation in various cellular pathways, including the STAT pathway and the steroid hormone signaling pathway. Repressor of STAT3 signaling via inhibiting STAT3 DNA-binding and suppressing cell growth. Repressor of MITF transcriptional activity. Enhances the sumoylation of MTA1 and may participate in its paralog-selective sumoylation. Sumoylates CCAR2 which promotes its interaction with SIRT1. Diminishes the sumoylation of ZFHX3 by preventing the colocalization of ZFHX3 with SUMO1 in the nucleus. The polypeptide is E3 SUMO-protein ligase PIAS3 (Pias3) (Mus musculus (Mouse)).